Reading from the N-terminus, the 265-residue chain is Glutamate racemase (265 aa).

Substrate-binding positions include 12–13 (DS) and 44–45 (YG). Cys75 serves as the catalytic Proton donor/acceptor. Residue 76-77 (NT) participates in substrate binding. Cys186 acts as the Proton donor/acceptor in catalysis. 187–188 (TH) provides a ligand contact to substrate.

Belongs to the aspartate/glutamate racemases family.

The enzyme catalyses L-glutamate = D-glutamate. It participates in cell wall biogenesis; peptidoglycan biosynthesis. In terms of biological role, provides the (R)-glutamate required for cell wall biosynthesis. The sequence is that of Glutamate racemase from Pseudomonas putida (strain GB-1).